Here is a 222-residue protein sequence, read N- to C-terminus: Probable translocation protein y4yL (222 aa).

4 consecutive transmembrane segments (helical) span residues 6-26, 52-72, 158-178, and 182-202; these read PAIL…LAVV, PNIV…APVA, IGFL…TILM, and MSMV…FVAI.

This sequence belongs to the FliP/MopC/SpaP family.

The protein resides in the cell membrane. Its function is as follows. Could be involved in the secretion of an unknown factor. The chain is Probable translocation protein y4yL from Sinorhizobium fredii (strain NBRC 101917 / NGR234).